The chain runs to 142 residues: Glia maturation factor gamma (142 aa).

The residue at position 2 (serine 2) is an N-acetylserine. Residues 4-139 (SLVVCEVDPE…TETWLKEKLA (136 aa)) enclose the ADF-H domain.

It belongs to the actin-binding proteins ADF family. GMF subfamily.

The chain is Glia maturation factor gamma (Gmfg) from Mus musculus (Mouse).